Consider the following 262-residue polypeptide: Aminoglycoside 3'-phosphotransferase (262 aa).

The active-site Proton acceptor is the aspartate 187.

Belongs to the aminoglycoside phosphotransferase family. As to quaternary structure, monomer.

The protein localises to the cytoplasm. The catalysed reaction is kanamycin A + ATP = kanamycin 3'-phosphate + ADP + H(+). Its function is as follows. Resistance to butirosin and structurally-related aminoglycosides, including kanamycin and amikacin. In Niallia circulans (Bacillus circulans), this protein is Aminoglycoside 3'-phosphotransferase.